Reading from the N-terminus, the 241-residue chain is Ribonuclease PH (241 aa).

Residues Arg-89 and 127–129 each bind phosphate; that span reads GTR.

It belongs to the RNase PH family. In terms of assembly, homohexameric ring arranged as a trimer of dimers.

The catalysed reaction is tRNA(n+1) + phosphate = tRNA(n) + a ribonucleoside 5'-diphosphate. Phosphorolytic 3'-5' exoribonuclease that plays an important role in tRNA 3'-end maturation. Removes nucleotide residues following the 3'-CCA terminus of tRNAs; can also add nucleotides to the ends of RNA molecules by using nucleoside diphosphates as substrates, but this may not be physiologically important. Probably plays a role in initiation of 16S rRNA degradation (leading to ribosome degradation) during starvation. This is Ribonuclease PH from Xylella fastidiosa (strain 9a5c).